Consider the following 349-residue polypeptide: Beta-glucanase (349 aa).

An N-terminal signal peptide occupies residues Met1–Ala27. The region spanning Lys28–Gly197 is the GH16 domain. Glu79 (nucleophile) is an active-site residue. Glu83 acts as the Proton donor in catalysis. Residues Ser258–Ile311 are disordered. Low complexity predominate over residues Ala270–Ala307. Tandem repeats lie at residues Pro271 to Ala277, Pro278 to Val284, Pro285 to Val291, Pro292 to Ala298, and Pro301 to Ala307. The interval Pro271–Ala307 is 5 X 7 AA tandem repeats of P-X-S-S-S-S-X.

This sequence belongs to the glycosyl hydrolase 16 family.

It carries out the reaction Hydrolysis of (1-&gt;4)-beta-D-glucosidic linkages in beta-D-glucans containing (1-&gt;3)- and (1-&gt;4)-bonds.. The polypeptide is Beta-glucanase (Fibrobacter succinogenes (strain ATCC 19169 / S85)).